The chain runs to 2148 residues: Polyketide synthase 1 (2148 aa).

The N-terminal acylcarrier protein transacylase domain (SAT) stretch occupies residues 19–261 (FIFGDQSSCN…TPLAVHAPYH (243 aa)). In terms of domain architecture, Ketosynthase family 3 (KS3) spans 394–829 (ESKIAIIGMS…GGNTALLVED (436 aa)). Active-site for beta-ketoacyl synthase activity residues include cysteine 566, histidine 701, and histidine 745. The tract at residues 929-1233 (AFVFSGQGSQ…PSLMRNKDGW (305 aa)) is malonyl-CoA:ACP transacylase (MAT) domain. The For acyl/malonyl transferase activity role is filled by serine 1018. A product template (PT) domain region spans residues 1310-1624 (TASVHRIVHE…RKVLNTAMPP (315 aa)). The N-terminal hotdog fold stretch occupies residues 1314-1447 (HRIVHESVEK…SSLHFEQPKV (134 aa)). The PKS/mFAS DH domain maps to 1314 to 1619 (HRIVHESVEK…FQGIPRKVLN (306 aa)). Catalysis depends on histidine 1346, which acts as the Proton acceptor; for dehydratase activity. Residues 1474–1619 (LNSRMSSGVI…FQGIPRKVLN (146 aa)) are C-terminal hotdog fold. The active-site Proton donor; for dehydratase activity is aspartate 1533. Positions 1619-1655 (NTAMPPPKSQNEAPVRSGPAKPAVKPPRSASSEHSGH) are disordered. One can recognise a Carrier 1 domain in the interval 1678–1752 (RNPMLPVFKI…DLAAHLGMDT (75 aa)). Serine 1712 carries the post-translational modification O-(pantetheine 4'-phosphoryl)serine. A compositionally biased stretch (low complexity) spans 1755 to 1790 (ADQSSGQSSSSGGLSPRSDSIGEMTSSATTPPSMSP). The interval 1755–1796 (ADQSSGQSSSSGGLSPRSDSIGEMTSSATTPPSMSPRGSVSG) is disordered. In terms of domain architecture, Carrier 2 spans 1793–1870 (SVSGSQCKDV…SFKHMFQQGH (78 aa)). Position 1830 is an O-(pantetheine 4'-phosphoryl)serine (serine 1830). The tract at residues 1882–2146 (LKQYRATSTL…ERVAAFIRSI (265 aa)) is thioesterase (TE) domain. The active-site For thioesterase activity is serine 1973.

Polyketide synthase; part of the Pks1 gene cluster that mediates the biosynthesis of an anthraquinone derivative pigment that contributes to conidial pigmentation that provides protection from UV radiation, heat and cold stress. The polyketide synthase Pks1 produces 1-acetyl-2,4,6,8-tetrahydroxy-9,10-anthraquinone though condensation of acetyl-CoA with malonyl-CoA. The dehydratase EthD and the laccase Mlac1 further convert the anthraquinone derivative into the final conidial pigment. This is Polyketide synthase 1 from Metarhizium brunneum (strain ARSEF 3297).